The chain runs to 96 residues: Putative membrane protein insertion efficiency factor (96 aa).

Over residues 71-84 (THGTAAAPPASAAP) the composition is skewed to low complexity. The tract at residues 71 to 96 (THGTAAAPPASAAPGRPPVTVRLPRP) is disordered.

Belongs to the UPF0161 family.

It is found in the cell inner membrane. In terms of biological role, could be involved in insertion of integral membrane proteins into the membrane. The chain is Putative membrane protein insertion efficiency factor from Cupriavidus metallidurans (strain ATCC 43123 / DSM 2839 / NBRC 102507 / CH34) (Ralstonia metallidurans).